A 252-amino-acid chain; its full sequence is Flap endonuclease Xni (252 aa).

Aspartate 105 provides a ligand contact to Mg(2+). The 91-residue stretch at 161–251 (VESTQFIDYL…NVNLKQFRIE (91 aa)) folds into the 5'-3' exonuclease domain. K(+) contacts are provided by leucine 172, alanine 173, proline 181, valine 183, and isoleucine 186. Residues 185-190 (GIGPKS) are interaction with DNA.

It belongs to the Xni family. Requires Mg(2+) as cofactor. The cofactor is K(+).

Has flap endonuclease activity. During DNA replication, flap endonucleases cleave the 5'-overhanging flap structure that is generated by displacement synthesis when DNA polymerase encounters the 5'-end of a downstream Okazaki fragment. The sequence is that of Flap endonuclease Xni from Shewanella halifaxensis (strain HAW-EB4).